The chain runs to 59 residues: Small ribosomal subunit protein bS21 (59 aa).

Residues Gly-27–Ala-59 form a disordered region. The segment covering Glu-31–Ser-42 has biased composition (basic and acidic residues). Residues Val-43–Ala-59 are compositionally biased toward basic residues.

The protein belongs to the bacterial ribosomal protein bS21 family.

This Carboxydothermus hydrogenoformans (strain ATCC BAA-161 / DSM 6008 / Z-2901) protein is Small ribosomal subunit protein bS21.